We begin with the raw amino-acid sequence, 702 residues long: Methionine--tRNA ligase (702 aa).

The short motif at 23-33 (PYANGPLHLGH) is the 'HIGH' region element. The Zn(2+) site is built by Cys-154, Cys-157, Cys-167, and Cys-170. Positions 341–345 (KMSKS) match the 'KMSKS' region motif. ATP is bound at residue Lys-344. The interval 562–593 (LAPPPASAKQQNASMSNTAPPPTAEEPETTAP) is disordered. Polar residues predominate over residues 569 to 578 (AKQQNASMSN). One can recognise a tRNA-binding domain in the interval 599–702 (DFAKLDLRIG…SSAQPGMPVR (104 aa)).

The protein belongs to the class-I aminoacyl-tRNA synthetase family. MetG type 1 subfamily. Homodimer. Zn(2+) serves as cofactor.

It localises to the cytoplasm. The enzyme catalyses tRNA(Met) + L-methionine + ATP = L-methionyl-tRNA(Met) + AMP + diphosphate. In terms of biological role, is required not only for elongation of protein synthesis but also for the initiation of all mRNA translation through initiator tRNA(fMet) aminoacylation. This Xylella fastidiosa (strain M23) protein is Methionine--tRNA ligase.